A 635-amino-acid chain; its full sequence is Threonine--tRNA ligase (635 aa).

Positions 1–61 constitute a TGS domain; it reads MVSIRLPDGS…DHDVALAIVT (61 aa). Positions 242 to 533 are catalytic; the sequence is DHRKLGKQLD…LIEHHAGAMP (292 aa). Residues cysteine 333, histidine 384, and histidine 510 each contribute to the Zn(2+) site.

The protein belongs to the class-II aminoacyl-tRNA synthetase family. As to quaternary structure, homodimer. Requires Zn(2+) as cofactor.

The protein resides in the cytoplasm. It catalyses the reaction tRNA(Thr) + L-threonine + ATP = L-threonyl-tRNA(Thr) + AMP + diphosphate + H(+). Its function is as follows. Catalyzes the attachment of threonine to tRNA(Thr) in a two-step reaction: L-threonine is first activated by ATP to form Thr-AMP and then transferred to the acceptor end of tRNA(Thr). Also edits incorrectly charged L-seryl-tRNA(Thr). The sequence is that of Threonine--tRNA ligase from Paraburkholderia phymatum (strain DSM 17167 / CIP 108236 / LMG 21445 / STM815) (Burkholderia phymatum).